A 379-amino-acid polypeptide reads, in one-letter code: MARSGYTLPVFACAAAIAALQHLKNLQAELDPIEGPLHSVTLDLINPPQTVEIAIEQVAKLGPGTALAISRSDPGDNLDITRNTPIWAVVTWAEDQQLDSIVIEGGEGIGRLSSTNDRAAIYAYAQHLLQTNLQKLLNSTEKIRVTIILPEGRSLAQRTSNAAFGIVDGLSLLGTSGISQPLSAPEQLEQFQTQLQQKAEQRKHLVFCLGENGLDLAQKLGIDTACLIKTANWIGPMLVAASLEGVEGILLLGYHGKLIKLAGGIFHTHHYVADARQEILTAYAATLGLPQTDLNVVFNSPTTEAALQHLRHLDQTTGSQWVAQIYTELVRQIDQRSQTYIQSQTNHRVIIGSILFDQQRQIIVSSPGGTALREQVTMA.

This sequence belongs to the CbiD family.

It catalyses the reaction Co-precorrin-5B + S-adenosyl-L-methionine = Co-precorrin-6A + S-adenosyl-L-homocysteine. The protein operates within cofactor biosynthesis; adenosylcobalamin biosynthesis; cob(II)yrinate a,c-diamide from sirohydrochlorin (anaerobic route): step 6/10. In terms of biological role, catalyzes the methylation of C-1 in cobalt-precorrin-5B to form cobalt-precorrin-6A. This is Cobalt-precorrin-5B C(1)-methyltransferase from Cyanothece sp. (strain PCC 7425 / ATCC 29141).